The chain runs to 112 residues: Large ribosomal subunit protein uL22 (112 aa).

Belongs to the universal ribosomal protein uL22 family. As to quaternary structure, part of the 50S ribosomal subunit.

Functionally, this protein binds specifically to 23S rRNA; its binding is stimulated by other ribosomal proteins, e.g. L4, L17, and L20. It is important during the early stages of 50S assembly. It makes multiple contacts with different domains of the 23S rRNA in the assembled 50S subunit and ribosome. Its function is as follows. The globular domain of the protein is located near the polypeptide exit tunnel on the outside of the subunit, while an extended beta-hairpin is found that lines the wall of the exit tunnel in the center of the 70S ribosome. This Akkermansia muciniphila (strain ATCC BAA-835 / DSM 22959 / JCM 33894 / BCRC 81048 / CCUG 64013 / CIP 107961 / Muc) protein is Large ribosomal subunit protein uL22.